A 644-amino-acid polypeptide reads, in one-letter code: Chaperone protein DnaK (644 aa).

Residue Thr-195 is modified to Phosphothreonine; by autocatalysis. Residues 598-644 (KQAAPGAGAPGAGPGPEAAGGAQQAQAEPKKDEGVIDAEYVDVDEKK) are disordered. A compositionally biased stretch (low complexity) spans 612 to 624 (GPEAAGGAQQAQA). The segment covering 632 to 644 (VIDAEYVDVDEKK) has biased composition (acidic residues).

It belongs to the heat shock protein 70 family.

Functionally, acts as a chaperone. This is Chaperone protein DnaK from Koribacter versatilis (strain Ellin345).